The primary structure comprises 434 residues: D-inositol 3-phosphate glycosyltransferase (434 aa).

H26 contributes to the 1D-myo-inositol 3-phosphate binding site. UDP-N-acetyl-alpha-D-glucosamine-binding positions include 32-33 and G40; that span reads QP. 1D-myo-inositol 3-phosphate contacts are provided by residues 37–42, K95, Y128, T152, and R172; that span reads DAGGMN. UDP-N-acetyl-alpha-D-glucosamine-binding residues include R246 and K251. Mg(2+) is bound by residues Y321, R322, and A324. Residues E334 and E342 each coordinate UDP-N-acetyl-alpha-D-glucosamine. A Mg(2+)-binding site is contributed by T348.

The protein belongs to the glycosyltransferase group 1 family. MshA subfamily. As to quaternary structure, homodimer.

It catalyses the reaction 1D-myo-inositol 3-phosphate + UDP-N-acetyl-alpha-D-glucosamine = 1D-myo-inositol 2-acetamido-2-deoxy-alpha-D-glucopyranoside 3-phosphate + UDP + H(+). Its function is as follows. Catalyzes the transfer of a N-acetyl-glucosamine moiety to 1D-myo-inositol 3-phosphate to produce 1D-myo-inositol 2-acetamido-2-deoxy-glucopyranoside 3-phosphate in the mycothiol biosynthesis pathway. This is D-inositol 3-phosphate glycosyltransferase from Thermobifida fusca (strain YX).